A 441-amino-acid chain; its full sequence is Glutamate--tRNA ligase 1 (441 aa).

The short motif at 8–18 (PSPTGYIHIGN) is the 'HIGH' region element. The 'KMSKS' region motif lies at 239 to 243 (ALSKR). Lysine 242 serves as a coordination point for ATP.

Belongs to the class-I aminoacyl-tRNA synthetase family. Glutamate--tRNA ligase type 1 subfamily. As to quaternary structure, monomer.

It localises to the cytoplasm. It catalyses the reaction tRNA(Glu) + L-glutamate + ATP = L-glutamyl-tRNA(Glu) + AMP + diphosphate. Catalyzes the attachment of glutamate to tRNA(Glu) in a two-step reaction: glutamate is first activated by ATP to form Glu-AMP and then transferred to the acceptor end of tRNA(Glu). In Roseobacter denitrificans (strain ATCC 33942 / OCh 114) (Erythrobacter sp. (strain OCh 114)), this protein is Glutamate--tRNA ligase 1.